The following is a 415-amino-acid chain: Interleukin-5 receptor subunit alpha (415 aa).

The signal sequence occupies residues 1–17 (MVPVLLILVGALATLQA). Topologically, residues 18–339 (DLLNHKKFLL…KERKSLVEWH (322 aa)) are extracellular. The Fibronectin type-III 1 domain maps to 29–120 (PPVNFTIKAT…VSAELKAPPG (92 aa)). Residues asparagine 32 and asparagine 128 are each glycosylated (N-linked (GlcNAc...) asparagine). 2 disulfide bridges follow: cysteine 131–cysteine 152 and cysteine 179–cysteine 193. Residues asparagine 213 and asparagine 241 are each glycosylated (N-linked (GlcNAc...) asparagine). The 94-residue stretch at 238 to 331 (PPRNVTVEIE…WSQPIYVGKE (94 aa)) folds into the Fibronectin type-III 2 domain. A disulfide bond links cysteine 266 and cysteine 313. A WSXWS motif motif is present at residues 319–323 (WGEWS). A helical membrane pass occupies residues 340-361 (LIVLPTAACFVLLIFSLICRVC). Over 362–415 (HLWTRLFPPVPAPKSNIKDLPVVTEYEKPSNETKIEVVHCVEEVGFEVMGNSTF) the chain is Cytoplasmic. The Box 1 motif motif lies at 367–375 (LFPPVPAPK).

As to quaternary structure, interacts with IL5. Interacts with CSF2RB. Interacts with JAK2. Interacts with SDCBP. As to expression, expressed on eosinophils and basophils. Also on B-cells.

The protein resides in the membrane. Cell surface receptor that plays an important role in the survival, differentiation, and chemotaxis of eosinophils. Acts by forming a heterodimeric receptor with CSF2RB subunit and subsequently binding to interleukin-5. In unstimulated conditions, interacts constitutively with JAK2. Heterodimeric receptor activation leads to JAK2 stimulation and subsequent activation of the JAK-STAT pathway. This is Interleukin-5 receptor subunit alpha (Il5ra) from Mus musculus (Mouse).